The following is a 139-amino-acid chain: NAD(P) transhydrogenase subunit alpha part 2 (139 aa).

The next 3 helical transmembrane spans lie at 49 to 69 (FWWLMTVFVLACFIGFYVVWS), 78 to 98 (LMGVTNAISSVIVVGALIATG), and 107 to 127 (VLGFFAILLASVNIFGGFIVT).

As to quaternary structure, complex of an alpha and a beta chain; in Rhodospirillum, the alpha chain seems to be made of two subunits.

The protein localises to the cell inner membrane. The catalysed reaction is NAD(+) + NADPH + H(+)(in) = NADH + NADP(+) + H(+)(out). In terms of biological role, the transhydrogenation between NADH and NADP is coupled to respiration and ATP hydrolysis and functions as a proton pump across the membrane. The protein is NAD(P) transhydrogenase subunit alpha part 2 (pntAB) of Rhodospirillum rubrum (strain ATCC 11170 / ATH 1.1.1 / DSM 467 / LMG 4362 / NCIMB 8255 / S1).